The primary structure comprises 215 residues: Protein C' (215 aa).

Disordered regions lie at residues 12 to 34 (MPSF…SRSR) and 51 to 71 (SEGT…QALP). The involved in self-degradation and in host STAT1 degradation stretch occupies residues 15–22 (FLKKILKL). Residues 51–65 (SEGTEAGSTTPSTLP) show a composition bias toward polar residues.

Belongs to the respirovirus protein C family. In terms of assembly, the different isoforms interact (via C-terminus) with unphosphorylated and phosphorylated human STAT1 (via N-terminus), favoring the formation of parallel STAT1 homodimers. The different isoforms do not interact with host STAT2. C protein interacts with L protein; this interaction has an inhibitory effect on viral transcription and replication. Y1 and Y2 proteins are produced not only by alternative initiation, but also by proteolytic cleavage of C'. Only alternative initiation is detected in vitro, whereas in vivo cleavage seems to be predominant.

It is found in the host cytoplasm. The different products prevent the establishment of cellular antiviral state by blocking the interferon-alpha/beta (IFN-alpha/beta) and IFN-gamma signaling pathways. They inhibit IFN-alpha/beta induced tyrosine phosphorylation of STAT1 and STAT2. Blocking the IFN-alpha/beta pathway requires binding to STAT1 in the cytoplasm. They inhibit IFN-gamma induced serine phosphorylation of STAT1. Block the IFN-gamma pathway by binding to and stabilizing the parallel form of the STAT1 dimer, further inducing high-molecular-weight complex formation and inhibition of transcription by IFN-gamma. May also have a role in preventing the cell to enter apoptosis. Modulate regulation of viral transcription and replication. Overexpression inhibits the viral RNA polymerase. The absence of all C', C, Y1 and Y2 proteins leads to viral delayed growth. Plays an important role in virion particles release. Modulates virion shape. This Sendai virus (strain Harris) (SeV) protein is Protein C' (P/V/C).